The chain runs to 227 residues: MEALKKIAGVTAAQYVTDGMTIGLGTGSTAYYFVEEIGRRVKQEGLQVVGVTTSSVTSKQAEGLGIPLKSIDDIDSIDLTVDGADEVDKDFNGIKGGGAALLMEKIVATPTKEYIWVVDASKMVEHLGAFKLPVEVVQYGADRLFRVFEKAGYKPSFRMKGDSRLVTDMQNYIIDLDLGCIKDPVAFGHLLDGTVGVVEHGLFNGMVDKVIVASKDGVTVLEAPKAG.

Residues T26–T29, D82–D85, and K95–G98 each bind substrate. The Proton acceptor role is filled by E104. A substrate-binding site is contributed by K122.

Belongs to the ribose 5-phosphate isomerase family. Homodimer.

It catalyses the reaction aldehydo-D-ribose 5-phosphate = D-ribulose 5-phosphate. It functions in the pathway carbohydrate degradation; pentose phosphate pathway; D-ribose 5-phosphate from D-ribulose 5-phosphate (non-oxidative stage): step 1/1. In terms of biological role, catalyzes the reversible conversion of ribose-5-phosphate to ribulose 5-phosphate. The protein is Ribose-5-phosphate isomerase A of Streptococcus pyogenes serotype M5 (strain Manfredo).